The chain runs to 196 residues: dITP/XTP pyrophosphatase (196 aa).

Substrate is bound at residue 8 to 13; sequence TKNEGK. E41 and D70 together coordinate Mg(2+). D70 (proton acceptor) is an active-site residue. Residues S71, 153-156, K176, and 181-182 contribute to the substrate site; these read FGYD and HR.

This sequence belongs to the HAM1 NTPase family. Homodimer. Mg(2+) serves as cofactor.

It carries out the reaction XTP + H2O = XMP + diphosphate + H(+). The enzyme catalyses dITP + H2O = dIMP + diphosphate + H(+). The catalysed reaction is ITP + H2O = IMP + diphosphate + H(+). Functionally, pyrophosphatase that catalyzes the hydrolysis of nucleoside triphosphates to their monophosphate derivatives, with a high preference for the non-canonical purine nucleotides XTP (xanthosine triphosphate), dITP (deoxyinosine triphosphate) and ITP. Seems to function as a house-cleaning enzyme that removes non-canonical purine nucleotides from the nucleotide pool, thus preventing their incorporation into DNA/RNA and avoiding chromosomal lesions. The protein is dITP/XTP pyrophosphatase of Bacillus licheniformis (strain ATCC 14580 / DSM 13 / JCM 2505 / CCUG 7422 / NBRC 12200 / NCIMB 9375 / NCTC 10341 / NRRL NRS-1264 / Gibson 46).